The chain runs to 545 residues: Glutamine-dependent NAD(+) synthetase (545 aa).

The CN hydrolase domain maps to 5 to 247 (LRIAMAQFDF…DQWLVVDYMR (243 aa)). Residue Glu46 is the Proton acceptor; for glutaminase activity of the active site. The For glutaminase activity role is filled by Lys113. Tyr119 provides a ligand contact to L-glutamine. The active-site Nucleophile; for glutaminase activity is Cys151. The L-glutamine site is built by Ser177 and Lys183. Residues 269-545 (VWRAVVRGVQ…RYPISNAYRG (277 aa)) are ligase. 292–299 (GLSGGIDS) lines the ATP pocket. Asn375 contacts deamido-NAD(+). Position 399 (Thr399) interacts with ATP. Deamido-NAD(+)-binding residues include Glu404 and Lys516.

This sequence in the C-terminal section; belongs to the NAD synthetase family.

It catalyses the reaction deamido-NAD(+) + L-glutamine + ATP + H2O = L-glutamate + AMP + diphosphate + NAD(+) + H(+). It functions in the pathway cofactor biosynthesis; NAD(+) biosynthesis; NAD(+) from deamido-NAD(+) (L-Gln route): step 1/1. In terms of biological role, catalyzes the ATP-dependent amidation of deamido-NAD to form NAD. Uses L-glutamine as a nitrogen source. The sequence is that of Glutamine-dependent NAD(+) synthetase from Xylella fastidiosa (strain Temecula1 / ATCC 700964).